The primary structure comprises 472 residues: Mitochondrial substrate carrier family protein C (472 aa).

Topologically, residues 1–189 (MVLNENDKEF…ASSLRNTITY (189 aa)) are mitochondrial intermembrane. EF-hand domains lie at 6–41 (NDKE…LRIP), 42–70 (SSEK…FEDF), 73–108 (ENIK…LNIP), and 110–145 (YSEQ…LPNS). Ca(2+)-binding residues include D19, D21, N23, K25, E30, D55, D57, D59, S61, E66, D86, N88, S90, T92, E97, D123, N125, D127, Q129, and E134. Solcar repeat units follow at residues 184–268 (RNTI…VKKL), 276–362 (LTSA…LKHK), and 375–461 (GQLL…FKKA). Residues 190–207 (MLAGSVAGFASRTSTAPL) form a helical membrane-spanning segment. Residues 208 to 242 (ERVKIMCQLNHGKPISLISAFKACYKDGGIKGFFR) lie on the Mitochondrial matrix side of the membrane. The chain crosses the membrane as a helical span at residues 243 to 263 (GNLANIIKVSPESAVKFGTYE). Residues 264–281 (YVKKLFAENDCELTSAQR) are Mitochondrial intermembrane-facing. A helical membrane pass occupies residues 282–302 (FISGSVAGVVSHTTLFPLEVV). Residues 303–330 (RLRLSAEIAGTYNGIFDCFKKIAISEKS) are Mitochondrial matrix-facing. A helical transmembrane segment spans residues 331 to 351 (IRPFYRGLGASITATIPHSGV). At 352–377 (NMMVYEFLKHKVIKMTGNEFPTAGQL) the chain is on the mitochondrial intermembrane side. A helical membrane pass occupies residues 378–398 (LVCASTSSVCGQLVGYPFHVV). Over 399-441 (KSRLITQGSSVNQEKYTGLFDGLTKIIKKEGPIGLYKGIVPSF) the chain is Mitochondrial matrix. A helical membrane pass occupies residues 442-462 (MKSIPSHSITFIVYEGFKKAF). Over 463-472 (DVNLKEKKHH) the chain is Mitochondrial intermembrane.

This sequence belongs to the mitochondrial carrier (TC 2.A.29) family.

It localises to the mitochondrion inner membrane. Functionally, calcium-dependent mitochondrial solute carrier. Mitochondrial solute carriers shuttle metabolites, nucleotides, and cofactors through the mitochondrial inner membrane. The polypeptide is Mitochondrial substrate carrier family protein C (mcfC) (Dictyostelium discoideum (Social amoeba)).